We begin with the raw amino-acid sequence, 401 residues long: MTATPAWTIQKPTALLVLADGTVIEGKGIGATGTVQAEVCFNTALTGYQEILTDPSYLGQIVTFTFPHIGNIGANDEDIEDLTPAARHGAVGVIFKADITEPSNYRAAKHLDAWLKARGIIGLCGIDTRALTAWIRENGMPNAVIAHDPAGVFDVEALKAEAKAWSGLEGLDLAKVATSGQSYRWNEKPWVWNEGYSTLGETDAAYHVVALDYGVKRNILRLFAGLNCRVTVVPAQTSAEEVLALKPDGIFLSNGPGDPAATGEYAVPVIQDLLKTDIPVFGICLGHQMLALALGARTEKMHQGHHGANHPVKDHTTGKVEIVSMNHGFAVDANSLPQGVEQTHISLFDGTNCGLRVDGRPVFSVQHHPEASPGPQDSHYLFRRFLNLIREKKGEPALAER.

The CPSase stretch occupies residues 1-203 (MTATPAWTIQ…EGYSTLGETD (203 aa)). L-glutamine-binding residues include S56, G255, and G257. The Glutamine amidotransferase type-1 domain occupies 207–395 (HVVALDYGVK…LNLIREKKGE (189 aa)). The Nucleophile role is filled by C284. L285, Q288, N326, G328, and F329 together coordinate L-glutamine. Catalysis depends on residues H368 and E370.

The protein belongs to the CarA family. Composed of two chains; the small (or glutamine) chain promotes the hydrolysis of glutamine to ammonia, which is used by the large (or ammonia) chain to synthesize carbamoyl phosphate. Tetramer of heterodimers (alpha,beta)4.

It carries out the reaction hydrogencarbonate + L-glutamine + 2 ATP + H2O = carbamoyl phosphate + L-glutamate + 2 ADP + phosphate + 2 H(+). The enzyme catalyses L-glutamine + H2O = L-glutamate + NH4(+). Its pathway is amino-acid biosynthesis; L-arginine biosynthesis; carbamoyl phosphate from bicarbonate: step 1/1. It functions in the pathway pyrimidine metabolism; UMP biosynthesis via de novo pathway; (S)-dihydroorotate from bicarbonate: step 1/3. Small subunit of the glutamine-dependent carbamoyl phosphate synthetase (CPSase). CPSase catalyzes the formation of carbamoyl phosphate from the ammonia moiety of glutamine, carbonate, and phosphate donated by ATP, constituting the first step of 2 biosynthetic pathways, one leading to arginine and/or urea and the other to pyrimidine nucleotides. The small subunit (glutamine amidotransferase) binds and cleaves glutamine to supply the large subunit with the substrate ammonia. The sequence is that of Carbamoyl phosphate synthase small chain from Rhizobium meliloti (strain 1021) (Ensifer meliloti).